Reading from the N-terminus, the 1246-residue chain is DNA-directed RNA polymerase subunit beta (1246 aa).

Residues 1171–1246 (IDDDAGEMSL…EFDGYNDFKA (76 aa)) form a disordered region. Composition is skewed to acidic residues over residues 1202–1223 (DEEE…EDFE) and 1230–1240 (EYAEDDDEFDG).

Belongs to the RNA polymerase beta chain family. The RNAP catalytic core consists of 2 alpha, 1 beta, 1 beta' and 1 omega subunit. When a sigma factor is associated with the core the holoenzyme is formed, which can initiate transcription.

The enzyme catalyses RNA(n) + a ribonucleoside 5'-triphosphate = RNA(n+1) + diphosphate. Functionally, DNA-dependent RNA polymerase catalyzes the transcription of DNA into RNA using the four ribonucleoside triphosphates as substrates. In Alkaliphilus metalliredigens (strain QYMF), this protein is DNA-directed RNA polymerase subunit beta.